A 137-amino-acid chain; its full sequence is Translation initiation factor 2 subunit beta (137 aa).

This sequence belongs to the eIF-2-beta/eIF-5 family. As to quaternary structure, heterotrimer composed of an alpha, a beta and a gamma chain.

In terms of biological role, eIF-2 functions in the early steps of protein synthesis by forming a ternary complex with GTP and initiator tRNA. This is Translation initiation factor 2 subunit beta (eif2b) from Archaeoglobus fulgidus (strain ATCC 49558 / DSM 4304 / JCM 9628 / NBRC 100126 / VC-16).